The sequence spans 482 residues: Anaerobic nitric oxide reductase flavorubredoxin (482 aa).

A zinc metallo-hydrolase region spans residues 30–210 (LRGSSYNSYL…PFSRLVTPKI (181 aa)). Residues H79, E81, D83, H147, D166, and H227 each contribute to the Fe cation site. In terms of domain architecture, Flavodoxin-like spans 254–393 (ITLFYDTMSN…ICRQHGREIA (140 aa)). Residues 260–264 (TMSNN) and 342–369 (AFGSHGWSGGAVDRLSTRLQDAGFEMSM) each bind FMN. One can recognise a Rubredoxin-like domain in the interval 426 to 477 (GPCMQCSVCQWVYDPALGEPLQDVAPGTPWSDVPDNFLCPECSLGKDVFDVL). Fe cation-binding residues include C431, C434, C464, and C467.

It in the N-terminal section; belongs to the zinc metallo-hydrolase group 3 family. Homotetramer. The cofactor is Fe cation. Requires FMN as cofactor.

Its subcellular location is the cytoplasm. Its pathway is nitrogen metabolism; nitric oxide reduction. Functionally, anaerobic nitric oxide reductase; uses NADH to detoxify nitric oxide (NO), protecting several 4Fe-4S NO-sensitive enzymes. Has at least 2 reductase partners, only one of which (NorW, flavorubredoxin reductase) has been identified. NO probably binds to the di-iron center; electrons enter from the NorW at rubredoxin and are transferred sequentially to the FMN center and the di-iron center. Also able to function as an aerobic oxygen reductase. This Enterobacter sp. (strain 638) protein is Anaerobic nitric oxide reductase flavorubredoxin.